The chain runs to 302 residues: Aurora/IPL1-related protein kinase 2 (302 aa).

Polar residues predominate over residues methionine 1 to asparagine 17. The tract at residues methionine 1–serine 23 is disordered. The region spanning phenylalanine 27–valine 277 is the Protein kinase domain. ATP-binding positions include leucine 33–valine 41 and lysine 56. Aspartate 150 serves as the catalytic Proton acceptor.

The protein belongs to the protein kinase superfamily. Ser/Thr protein kinase family. As to quaternary structure, interacts with zen-4 and icp-1. Part of a complex containing at least air-2; icp-1; csc-1 and bir-1. Interacts with tlk-1 and bmk-1.

It localises to the cytoplasm. It is found in the cytoskeleton. The protein resides in the chromosome. The protein localises to the midbody. The enzyme catalyses L-seryl-[protein] + ATP = O-phospho-L-seryl-[protein] + ADP + H(+). It carries out the reaction L-threonyl-[protein] + ATP = O-phospho-L-threonyl-[protein] + ADP + H(+). Serine/threonine-protein kinase which mediates both meiotic and mitotic chromosome segregation. Required for histone H3 'Ser-10' phosphorylation. Phosphorylates tlk-1 and zen-4. This chain is Aurora/IPL1-related protein kinase 2 (air-2), found in Caenorhabditis briggsae.